A 144-amino-acid chain; its full sequence is MSSKFIKPGRLVILLNGKYAGRKAVVIKTFDDATASKSRPYGHCLVAGIDKYPRSIVRSMSRKTILKRTAIRSFVKVVNYNHIMPTRYNFEGRDESAFTGLKNTVTVESSQVAKRAHTRLAVKKIFEAKHKAGKSKWFFSKLRF.

The 38-residue stretch at 6–43 (IKPGRLVILLNGKYAGRKAVVIKTFDDATASKSRPYGH) folds into the KOW domain.

The protein belongs to the eukaryotic ribosomal protein eL27 family.

This Dictyostelium discoideum (Social amoeba) protein is Large ribosomal subunit protein eL27 (rpl27).